Consider the following 408-residue polypeptide: BRCA1-A complex subunit Abraxas 1 (408 aa).

An MPN domain is found at 7-155; that stretch reads TAVISGFVFG…KSTHRLEYAL (149 aa). Positions 210-272 form a coiled coil; the sequence is ALAEVNRISD…MEEKGNKVSE (63 aa). A disordered region spans residues 335-408; the sequence is HRRQAGKRKA…EVSRSKSPTF (74 aa). The segment covering 337–358 has biased composition (basic residues); that stretch reads RQAGKRKAHSKQLGKTSTKKSR. The segment covering 394–408 has biased composition (polar residues); it reads QSLNVEVSRSKSPTF. S405 bears the Phosphoserine mark. Residues 405-408 carry the pSXXF motif motif; it reads SPTF.

This sequence belongs to the FAM175 family. Abraxas subfamily. In terms of assembly, component of the BRCA1-A complex. Component of the BRISC complex. Homodimer. Interacts directly (when phosphorylated at Ser-405) with brca1. The phosphorylated homodimer can interact directly with two brca1 chains, giving rise to a heterotetramer. In terms of processing, phosphorylation of Ser-405 of the pSXXF motif by ATM or ATR constitutes a specific recognition motif for the BRCT domain of BRCA1.

Its subcellular location is the nucleus. Its function is as follows. Involved in DNA damage response and double-strand break (DSB) repair. Component of the BRCA1-A complex, acting as a central scaffold protein that assembles the various components of the complex and mediates the recruitment of brca1. The BRCA1-A complex specifically recognizes 'Lys-63'-linked ubiquitinated histones H2A and H2AX at DNA lesion sites, leading to target the brca1-bard1 heterodimer to sites of DNA damage at DSBs. This complex also possesses deubiquitinase activity that specifically removes 'Lys-63'-linked ubiquitin on histones H2A and H2AX. The protein is BRCA1-A complex subunit Abraxas 1 of Xenopus laevis (African clawed frog).